Here is a 116-residue protein sequence, read N- to C-terminus: Iron-sulfur cluster insertion protein ErpA (116 aa).

Iron-sulfur cluster contacts are provided by C44, C108, and C110.

This sequence belongs to the HesB/IscA family. In terms of assembly, homodimer. The cofactor is iron-sulfur cluster.

Its function is as follows. Required for insertion of 4Fe-4S clusters for at least IspG. The polypeptide is Iron-sulfur cluster insertion protein ErpA (Stutzerimonas stutzeri (strain A1501) (Pseudomonas stutzeri)).